Reading from the N-terminus, the 460-residue chain is Glucan endo-1,3-beta-D-glucosidase (460 aa).

An N-terminal signal peptide occupies residues 1–26; that stretch reads MAANVQTSSLLFLVFLLLQNFYSANS. The active-site Proton donor is the Glu-123. The active-site Nucleophile is the Glu-268. Residues 352 to 371 form a disordered region; sequence NTQNPTTPATPTPTPKAAGS. N-linked (GlcNAc...) asparagine glycosylation occurs at Asn-355. A disulfide bond links Cys-373 and Cys-435. A glycan (N-linked (GlcNAc...) asparagine) is linked at Asn-447.

It belongs to the glycosyl hydrolase 17 family. In terms of assembly, homodimer. Glycosylated. Post-translationally, contains two additional disulfide bonds, but it is unclear if they are between the pairs Cys-392-Cys-398 and Cys-407-Cys-453 (PudMed:18096638) or between the pairs Cys-392-Cys-453 and Cys-398-Cys-407 (PudMed:12392450). Expressed only in pollen.

The protein localises to the secreted. The catalysed reaction is Hydrolysis of (1-&gt;3)-beta-D-glucosidic linkages in (1-&gt;3)-beta-D-glucans.. The polypeptide is Glucan endo-1,3-beta-D-glucosidase (OLE9) (Olea europaea (Common olive)).